Reading from the N-terminus, the 254-residue chain is Ribosomal RNA small subunit methyltransferase G (254 aa).

Positions 84–109 (NTESKTSLNNAETKNTNEALLTSEPF) are insert. S-adenosyl-L-methionine contacts are provided by residues glycine 115, phenylalanine 120, 171-172 (AE), and arginine 185.

The protein belongs to the methyltransferase superfamily. RNA methyltransferase RsmG family.

Its subcellular location is the cytoplasm. Functionally, specifically methylates the N7 position of a guanine in 16S rRNA. The sequence is that of Ribosomal RNA small subunit methyltransferase G from Treponema denticola (strain ATCC 35405 / DSM 14222 / CIP 103919 / JCM 8153 / KCTC 15104).